Consider the following 534-residue polypeptide: Cytokine-like nuclear factor N-PAC (534 aa).

One can recognise a PWWP domain in the interval 8 to 66 (QGDLVWGKLGRYPPWPGKIVNPPKDLKKPRGKKCLFVKFFGTEDHAWIKVEQLKPYHAH). Basic and acidic residues-rich tracts occupy residues 93–122 (AKAK…QTGE) and 138–157 (RSRD…DKDS). A disordered region spans residues 93–168 (AKAKEHAKEH…SPQPSSLKKL (76 aa)). The a.T hook DNA-binding region spans 144-156 (PRKRGRPPKDDKD). Residues 190 to 193 (DSWL) are interaction with histone H3. Residues 242-534 (GNIIPTDKKI…MSAVYRAYIH (293 aa)) are dehydrogenase domain. NAD(+) contacts are provided by residues 252-266 (GFLG…IVSN), Thr343, and Lys486.

The protein belongs to the HIBADH-related family. NP60 subfamily. Homotetramere. Binds to mononucleosomes.

It is found in the nucleus. Its subcellular location is the chromosome. Functionally, cytokine-like nuclear factor with chromatin gene reader activity involved in chromatin modification and regulation of gene expression. Acts as a nucleosome-destabilizing factor that is recruited to genes during transcriptional activation. Recognizes and binds histone H3 without a preference for specific epigenetic markers and also binds DNA. Interacts with KDM1B and promotes its histone demethylase activity by facilitating the capture of H3 tails, they form a multifunctional enzyme complex that modifies transcribed chromatin and facilitates Pol II transcription through nucleosomes. This is Cytokine-like nuclear factor N-PAC (glyr1) from Xenopus tropicalis (Western clawed frog).